The following is a 4083-amino-acid chain: Dynein heavy chain, cytoplasmic (4083 aa).

The stem stretch occupies residues 1–1745 (MTDDQVAQAL…TIEQSCVSFC (1745 aa)). Coiled coils occupy residues 127-166 (DAVV…FIEV), 381-402 (INQW…MRKR), and 801-821 (KLDL…VDQA). AAA regions lie at residues 1746–1967 (YGFE…VLRN), 2026–2265 (SYLA…YKAD), 2373–2622 (SLES…WVRG), and 2716–2980 (TFAE…GNSQ). Residues 1784–1791 (GPAGTGKT), 2064–2071 (GDAGTGKT), 2412–2419 (GPPGSGKT), and 2754–2761 (GPNYSGKT) contribute to the ATP site. A stalk region spans residues 2987 to 3294 (LTSLRRFQSL…RSIKLMESLT (308 aa)). Coiled coils occupy residues 3015–3085 (LEKL…NERR), 3223–3302 (LKEE…RWIK), and 3527–3607 (LEKE…VEDL). AAA stretches follow at residues 3364-3592 (MVNP…EIAK) and 3748-3952 (LKSL…FLDH).

This sequence belongs to the dynein heavy chain family. In terms of assembly, consists of at least two heavy chains and a number of intermediate and light chains.

The protein resides in the cytoplasm. Its subcellular location is the cytoskeleton. Its function is as follows. Cytoplasmic dynein acts as a motor for the intracellular retrograde motility of vesicles and organelles along microtubules. Dynein has ATPase activity; the force-producing power stroke is thought to occur on release of ADP. Required to maintain uniform nuclear distribution in hyphae. May play an important role in the proper orientation of the mitotic spindle into the budding daughter cell yeast. Probably required for normal progression of the cell cycle. The polypeptide is Dynein heavy chain, cytoplasmic (DYN1) (Eremothecium gossypii (strain ATCC 10895 / CBS 109.51 / FGSC 9923 / NRRL Y-1056) (Yeast)).